Here is a 43-residue protein sequence, read N- to C-terminus: Protein PsbN (43 aa).

A helical membrane pass occupies residues 5–27 (TVFSIFISCLLLSLTGYSLYTAF).

Belongs to the PsbN family.

The protein localises to the plastid. It localises to the chloroplast thylakoid membrane. Functionally, may play a role in photosystem I and II biogenesis. This is Protein PsbN from Chlorokybus atmophyticus (Soil alga).